A 247-amino-acid polypeptide reads, in one-letter code: ATP synthase subunit a, chloroplastic (247 aa).

5 consecutive transmembrane segments (helical) span residues 38 to 58 (QVLI…TIAV), 95 to 115 (VPFI…GALL), 134 to 154 (INTT…AGLT), 199 to 219 (LVVV…VMLL), and 220 to 240 (GLFT…AYIG).

This sequence belongs to the ATPase A chain family. F-type ATPases have 2 components, CF(1) - the catalytic core - and CF(0) - the membrane proton channel. CF(1) has five subunits: alpha(3), beta(3), gamma(1), delta(1), epsilon(1). CF(0) has four main subunits: a, b, b' and c.

The protein localises to the plastid. It localises to the chloroplast thylakoid membrane. Its function is as follows. Key component of the proton channel; it plays a direct role in the translocation of protons across the membrane. The polypeptide is ATP synthase subunit a, chloroplastic (Solanum lycopersicum (Tomato)).